The sequence spans 532 residues: Cytochrome P450 monooxygenase criE (532 aa).

Residues 18–38 traverse the membrane as a helical segment; that stretch reads VSPAALSWAVVAVYIGTFFWL. Position 441 (cysteine 441) interacts with heme.

It belongs to the cytochrome P450 family. Heme serves as cofactor.

Its subcellular location is the membrane. The enzyme catalyses preechinulin + reduced [NADPH--hemoprotein reductase] + O2 = neoechinulin A + oxidized [NADPH--hemoprotein reductase] + 2 H2O + H(+). The protein operates within secondary metabolite biosynthesis. It participates in alkaloid biosynthesis. Cytochrome P450 monooxygenase; part of the gene cluster that mediates the biosynthesis of echinulin family alkaloid. The pathway begins with the biosynthesis of the cyclic dipeptide cyclo-L-Trp-L-Ala (cyclo-TA) by the NRPS criC via condensation of L-alanine and L-tryptophan. The prenyltransferase criA then catalyzes the first prenylation step, a reverse prenylation reaction at C2, to yield preechinulin. Preechinulin is the substrate of the cytochrome P450 monooxygenase criE that catalyzes the formation of the double bond between C10 and C11 to produce neoechulin A. The unique prenyltransferase criF functions as a competitive enzyme with criE for preechinulin metabolization and uses preechinulin for effective regiospecific prenylations. Preechinulin is prenylated by criF at C5 or C7. C7-prenylation leads to accumulation of tardioxopiperazine B without further modification by criF. In contrast, the C5-prenylated tardioxopiperazine A can be prenylated again by criF, predominantly at C7 to form echinulin or less frequently at C4 to give variecolorin L. CriF also accepts neoechilunin A to produce varlecolorin G (prenylation at C5) or isoechinulin A (prenylation at C7). CriF further converts isoechinulin A into dehydroechinulin. Moreover, a yet unidentified enzyme can also convert neoechilunin A into neoechilunin B by introducing a double bond between positions C14 and C17 and thus provides a further substrate to criF for C5 and C7 prenylation. The protein is Cytochrome P450 monooxygenase criE of Aspergillus cristatus (Chinese Fuzhuan brick tea-fermentation fungus).